Consider the following 279-residue polypeptide: Pantothenate synthetase (279 aa).

Position 26-33 (26-33) interacts with ATP; the sequence is MGNLHEGH. The active-site Proton donor is H33. Q57 is a (R)-pantoate binding site. Q57 contributes to the beta-alanine binding site. 144–147 contributes to the ATP binding site; that stretch reads GKKD. Q150 lines the (R)-pantoate pocket. ATP-binding positions include V173 and 181-184; that span reads LSSR.

This sequence belongs to the pantothenate synthetase family. Homodimer.

The protein localises to the cytoplasm. The catalysed reaction is (R)-pantoate + beta-alanine + ATP = (R)-pantothenate + AMP + diphosphate + H(+). It functions in the pathway cofactor biosynthesis; (R)-pantothenate biosynthesis; (R)-pantothenate from (R)-pantoate and beta-alanine: step 1/1. Functionally, catalyzes the condensation of pantoate with beta-alanine in an ATP-dependent reaction via a pantoyl-adenylate intermediate. The protein is Pantothenate synthetase of Burkholderia cenocepacia (strain HI2424).